A 178-amino-acid polypeptide reads, in one-letter code: Cytochrome b6-f complex iron-sulfur subunit (178 aa).

The helical transmembrane segment at 20–42 (LLTFGTATGVALGALYPVANYFM) threads the bilayer. Positions 65–161 (KTGWLATHQA…VDIEDDAVLV (97 aa)) constitute a Rieske domain. The [2Fe-2S] cluster site is built by C107, H109, C125, and H128. C112 and C127 are disulfide-bonded.

It belongs to the Rieske iron-sulfur protein family. The 4 large subunits of the cytochrome b6-f complex are cytochrome b6, subunit IV (17 kDa polypeptide, PetD), cytochrome f and the Rieske protein, while the 4 small subunits are PetG, PetL, PetM and PetN. The complex functions as a dimer. [2Fe-2S] cluster serves as cofactor.

It localises to the cellular thylakoid membrane. It carries out the reaction 2 oxidized [plastocyanin] + a plastoquinol + 2 H(+)(in) = 2 reduced [plastocyanin] + a plastoquinone + 4 H(+)(out). Functionally, component of the cytochrome b6-f complex, which mediates electron transfer between photosystem II (PSII) and photosystem I (PSI), cyclic electron flow around PSI, and state transitions. The sequence is that of Cytochrome b6-f complex iron-sulfur subunit from Prochlorococcus marinus (strain MIT 9215).